The sequence spans 103 residues: Protein translation factor SUI1 homolog (103 aa).

It belongs to the SUI1 family.

The sequence is that of Protein translation factor SUI1 homolog from Methanocaldococcus jannaschii (strain ATCC 43067 / DSM 2661 / JAL-1 / JCM 10045 / NBRC 100440) (Methanococcus jannaschii).